Reading from the N-terminus, the 112-residue chain is Small ribosomal subunit protein bS6 (112 aa).

The protein belongs to the bacterial ribosomal protein bS6 family.

Its function is as follows. Binds together with bS18 to 16S ribosomal RNA. This is Small ribosomal subunit protein bS6 from Chlamydia trachomatis serovar L2 (strain ATCC VR-902B / DSM 19102 / 434/Bu).